A 41-amino-acid polypeptide reads, in one-letter code: Large ribosomal subunit protein bL36 (41 aa).

The protein belongs to the bacterial ribosomal protein bL36 family.

The polypeptide is Large ribosomal subunit protein bL36 (Azorhizobium caulinodans (strain ATCC 43989 / DSM 5975 / JCM 20966 / LMG 6465 / NBRC 14845 / NCIMB 13405 / ORS 571)).